The primary structure comprises 308 residues: FGLLLGICLIVQIVTGLLLAAHYTADTSLAFASVAHMCRNVQFGWLIRNLHANGASFFFICIYLHIGRGLYYGSYLNKETWNIGVILLLTLMATAFVGYVLPWGQMSFWGATVITNLFSAIPYIGQTLVEWAWGGFSVDNPTLTRFFALHFLLPFVIAGLTLVHLTFLHETGSNNPLGIPSDCDKIPFHPYYSTKDMLGFALMLIPLITLALFSPNLLGDPENFTPANPLATPPHIKPEWYFLFAYAILRSIPNKLGGVLALAASVLVLFLIPLLHTSKARSMTFRPLSQILFWTLVANLLVLTWVGS.

4 helical membrane-spanning segments follow: residues Phe1–Ala21, Trp45–Ile66, Trp81–Leu101, and Phe146–Thr166. Heme b contacts are provided by His51 and His65. Heme b contacts are provided by His150 and His164. His169 provides a ligand contact to a ubiquinone. The next 3 helical transmembrane spans lie at Thr194–Ser214, Leu256–His276, and Leu288–Ser308.

Belongs to the cytochrome b family. In terms of assembly, the cytochrome bc1 complex contains 11 subunits: 3 respiratory subunits (MT-CYB, CYC1 and UQCRFS1), 2 core proteins (UQCRC1 and UQCRC2) and 6 low-molecular weight proteins (UQCRH/QCR6, UQCRB/QCR7, UQCRQ/QCR8, UQCR10/QCR9, UQCR11/QCR10 and a cleavage product of UQCRFS1). This cytochrome bc1 complex then forms a dimer. Heme b is required as a cofactor.

It is found in the mitochondrion inner membrane. Component of the ubiquinol-cytochrome c reductase complex (complex III or cytochrome b-c1 complex) that is part of the mitochondrial respiratory chain. The b-c1 complex mediates electron transfer from ubiquinol to cytochrome c. Contributes to the generation of a proton gradient across the mitochondrial membrane that is then used for ATP synthesis. This Pomatostomus temporalis (Grey-crowned babbler) protein is Cytochrome b (MT-CYB).